We begin with the raw amino-acid sequence, 331 residues long: Nucleotide sugar transporter SLC35B4 (331 aa).

The next 11 membrane-spanning stretches (helical) occupy residues 4-24, 30-50, 59-79, 92-112, 124-144, 153-173, 201-221, 229-249, 251-267, 268-288, and 294-314; these read AFAV…LELL, GCGN…GFLF, PAIP…VSVV, LHMI…IIIL, IALV…QVTV, GFQA…ALLM, ALPL…VVLF, VPVI…NVVT, YVCI…CTSL, TVTL…ILYF, and MWHW…TEVW. The Mediates endoplasmic reticulum retention motif lies at 326-331; that stretch reads KDDKKD.

It belongs to the nucleotide-sugar transporter family. SLC35B subfamily.

The protein resides in the endoplasmic reticulum membrane. The enzyme catalyses UDP-N-acetyl-alpha-D-glucosamine(in) + UDP-alpha-D-glucuronate(out) = UDP-N-acetyl-alpha-D-glucosamine(out) + UDP-alpha-D-glucuronate(in). The catalysed reaction is UDP-alpha-D-xylose(in) + UDP-alpha-D-glucuronate(out) = UDP-alpha-D-xylose(out) + UDP-alpha-D-glucuronate(in). Its function is as follows. Antiporter that transports nucleotide sugars across the endoplasmic reticulum (ER) membrane in exchange for another nucleotide sugar. May couple UDP-alpha-D-glucuronate (UDP-GlcA) or UDP-alpha-D-xylose (UDP-Xyl) efflux to UDP-alpha-D-glucuronate (UDP-GlcA) influx into the ER lumen, which in turn stimulates glucuronidation and excretion of endobiotics and xenobiotics. The sequence is that of Nucleotide sugar transporter SLC35B4 (Slc35b4) from Mus musculus (Mouse).